Reading from the N-terminus, the 231-residue chain is 5'-methylthioadenosine/S-adenosylhomocysteine nucleosidase (231 aa).

Glu-12 acts as the Proton acceptor in catalysis. Substrate is bound by residues Gly-78, Val-153, and 174–175; that span reads ME. Asp-198 (proton donor) is an active-site residue.

Belongs to the PNP/UDP phosphorylase family. MtnN subfamily.

The enzyme catalyses S-adenosyl-L-homocysteine + H2O = S-(5-deoxy-D-ribos-5-yl)-L-homocysteine + adenine. It catalyses the reaction S-methyl-5'-thioadenosine + H2O = 5-(methylsulfanyl)-D-ribose + adenine. The catalysed reaction is 5'-deoxyadenosine + H2O = 5-deoxy-D-ribose + adenine. Its pathway is amino-acid biosynthesis; L-methionine biosynthesis via salvage pathway; S-methyl-5-thio-alpha-D-ribose 1-phosphate from S-methyl-5'-thioadenosine (hydrolase route): step 1/2. In terms of biological role, catalyzes the irreversible cleavage of the glycosidic bond in both 5'-methylthioadenosine (MTA) and S-adenosylhomocysteine (SAH/AdoHcy) to adenine and the corresponding thioribose, 5'-methylthioribose and S-ribosylhomocysteine, respectively. Also cleaves 5'-deoxyadenosine, a toxic by-product of radical S-adenosylmethionine (SAM) enzymes, into 5-deoxyribose and adenine. This Aliivibrio salmonicida (strain LFI1238) (Vibrio salmonicida (strain LFI1238)) protein is 5'-methylthioadenosine/S-adenosylhomocysteine nucleosidase.